The sequence spans 131 residues: Snaclec macrovipecetin subunit alpha (131 aa).

3 disulfide bridges follow: Cys-2-Cys-13, Cys-30-Cys-125, and Cys-100-Cys-117. A C-type lectin domain is found at His-9 to Lys-126.

Heterodimer of subunits alpha and beta; disulfide-linked. Expressed by the venom gland.

It is found in the secreted. Its function is as follows. Interferes with one step of hemostasis (modulation of platelet aggregation, or coagulation cascade, for example). The sequence is that of Snaclec macrovipecetin subunit alpha from Macrovipera lebetinus (Levantine viper).